A 393-amino-acid chain; its full sequence is Peptidyl-prolyl cis-trans isomerase CYP7 (393 aa).

One can recognise a PPIase cyclophilin-type domain in the interval 8-196 (YLDISIDKKP…SDVRISDCGV (189 aa)). 3 TPR repeats span residues 240-273 (ANII…INEY), 292-325 (MKIY…DNVP), and 330-363 (AKAY…NPDD).

Interacts with RPD3 and CNS1.

It carries out the reaction [protein]-peptidylproline (omega=180) = [protein]-peptidylproline (omega=0). Its function is as follows. PPIases accelerate the folding of proteins. It catalyzes the cis-trans isomerization of proline imidic peptide bonds in oligopeptides. Plays a major role in negative regulation of the heat shock transcription factor (HSF). In Saccharomyces cerevisiae (strain ATCC 204508 / S288c) (Baker's yeast), this protein is Peptidyl-prolyl cis-trans isomerase CYP7 (CPR7).